A 283-amino-acid polypeptide reads, in one-letter code: Ribosome biogenesis GTPase A (283 aa).

The CP-type G domain maps to 14 to 178 (RREVTEKLKL…LLDTPGILWP (165 aa)). GTP contacts are provided by residues 58–61 (NKAD), 86–87 (NS), 130–135 (NVGKST), and glycine 174.

Belongs to the TRAFAC class YlqF/YawG GTPase family. MTG1 subfamily. In terms of assembly, interacts with ctc. Interacts with the immature 50S ribosome subunit. 2 molecules of rbgA bind to one 50S subunit.

The protein localises to the cytoplasm. Essential protein that is required for a late step of 50S ribosomal subunit assembly. Has GTPase activity that is stimulated by interaction with the immature 50S ribosome subunit. Binds to the 23S rRNA. Required for the association of ribosomal proteins rplP and rpmA with the large subunit. This chain is Ribosome biogenesis GTPase A, found in Bacillus licheniformis (strain ATCC 14580 / DSM 13 / JCM 2505 / CCUG 7422 / NBRC 12200 / NCIMB 9375 / NCTC 10341 / NRRL NRS-1264 / Gibson 46).